The primary structure comprises 767 residues: MNSIKATKGLLALSQQDDLMDLTSNYPLSASEDEGDSDGERKHQKLLEAIGSLSGKNRWKLPERSEAGLKVSEFNVSSEGSGEKLALSDLLGPLKPSSSLAAVKKQLSRVKSKKTLELPLHKREVEQIHREVAFSKTSQTLSKWDSVVQKNREAEQLVFPLEKEPSSFAPMEHVFREWKARTPLEQEVFNLLHKNKQPVTDPLLTPVEKASLKAMSLEEAKIRRAELQRARALQSYYEARARRMKKIKSKKYHKIVKKGKAKKALKDFEQLRKVDPDAALEELEKMEKARMMERMSLKHQNSGKWAKSKAIMAKYDLEARQAMQEQLAKNKELTQKLQVVSESEEEGGADEEEALVPDIVNEVQKTADGPNPWMLRSCSRDAKENEIQADSEQLPESAAHEFPENEENDKPVAEEDELLKELEKRRSLRKRSELNQAAEPLGNQETKDSTSQEVLSELRALSKKLSKENHLSKKQKKSPAKAVDLVWEEEPAPEEDEPLLLQRPERMRTLEELEELGKEDSLPNKERPRPSVEGEQVRRNPQNHSKGKNKKEQMISLQNLLTTRTPSVTSLALPTTVEELEDEGARDQKQMIKEAFAGDDVIKEFLKEKREAIQANKPKAVDLTLPGWGEWGGMNLKPSARKRRRFLIKAPEGPPRKDKNLPNVIISEKRNIHAAAHQVRVLPYPFTHHQQFERTIQNPIGSTWNTQRAFQKLTAPKVVTKPGHIIKPITAEDVDCRSSPRSDVPVMQSNPKQHSKHQKQRKKSSIG.

Residues threonine 23 to alanine 49 form a disordered region. A phosphoserine mark is found at serine 29, serine 31, serine 37, serine 52, serine 77, and serine 81. Lysine 122 is covalently cross-linked (Glycyl lysine isopeptide (Lys-Gly) (interchain with G-Cter in SUMO2)). Threonine 205 is subject to Phosphothreonine. Residues leucine 317–glutamate 346 adopt a coiled-coil conformation. The segment at glutamine 338–methionine 554 is disordered. Over residues glutamate 342–leucine 355 the composition is skewed to acidic residues. Positions alanine 398–glutamate 433 are enriched in basic and acidic residues. Position 431 is a citrulline (arginine 431). A Glycyl lysine isopeptide (Lys-Gly) (interchain with G-Cter in SUMO2) cross-link involves residue lysine 447. Phosphoserine is present on serine 451. Acidic residues predominate over residues valine 486–proline 498. The span at arginine 503–arginine 538 shows a compositional bias: basic and acidic residues. Lysine 518 participates in a covalent cross-link: Glycyl lysine isopeptide (Lys-Gly) (interchain with G-Cter in SUMO2). At arginine 586 the chain carries Citrulline. The interval threonine 730–glycine 767 is disordered. Positions glutamine 753–glycine 767 are enriched in basic residues.

The protein belongs to the UTP14 family. Interacts with DHX37. In terms of processing, citrullinated by PADI4. Ubiquitously expressed.

The protein localises to the nucleus. It is found in the nucleolus. Its function is as follows. May be required for ribosome biogenesis. This chain is U3 small nucleolar RNA-associated protein 14 homolog A (Utp14a), found in Mus musculus (Mouse).